Here is a 158-residue protein sequence, read N- to C-terminus: NAD(P)H-quinone oxidoreductase subunit J, chloroplastic (158 aa).

Belongs to the complex I 30 kDa subunit family. NDH is composed of at least 16 different subunits, 5 of which are encoded in the nucleus.

Its subcellular location is the plastid. It is found in the chloroplast thylakoid membrane. It catalyses the reaction a plastoquinone + NADH + (n+1) H(+)(in) = a plastoquinol + NAD(+) + n H(+)(out). The catalysed reaction is a plastoquinone + NADPH + (n+1) H(+)(in) = a plastoquinol + NADP(+) + n H(+)(out). Functionally, NDH shuttles electrons from NAD(P)H:plastoquinone, via FMN and iron-sulfur (Fe-S) centers, to quinones in the photosynthetic chain and possibly in a chloroplast respiratory chain. The immediate electron acceptor for the enzyme in this species is believed to be plastoquinone. Couples the redox reaction to proton translocation, and thus conserves the redox energy in a proton gradient. The protein is NAD(P)H-quinone oxidoreductase subunit J, chloroplastic of Pelargonium hortorum (Common geranium).